A 714-amino-acid polypeptide reads, in one-letter code: Penicillin-binding protein 1F (714 aa).

Topologically, residues 1–12 are cytoplasmic; the sequence is MFKIKKKKLFIP. Residues 13-33 traverse the membrane as a helical; Signal-anchor for type II membrane protein segment; sequence IIILVLTAFLALIGYISIIFL. Residues 34–714 lie on the Extracellular side of the membrane; that stretch reads GHYVIDEKKL…DYVQPKLFSS (681 aa). The transglycosylase stretch occupies residues 49–217; it reads SKIVDQNGDE…STYSPILHPD (169 aa). E87 functions as the Proton donor; for transglycosylase activity in the catalytic mechanism. The transpeptidase stretch occupies residues 297–592; it reads SKLQKTAYQV…SSYPTRLFKD (296 aa). Catalysis depends on S359, which acts as the Acyl-ester intermediate; for transpeptidase activity.

The protein in the N-terminal section; belongs to the glycosyltransferase 51 family. This sequence in the C-terminal section; belongs to the transpeptidase family.

The protein localises to the cell membrane. The enzyme catalyses [GlcNAc-(1-&gt;4)-Mur2Ac(oyl-L-Ala-gamma-D-Glu-L-Lys-D-Ala-D-Ala)](n)-di-trans,octa-cis-undecaprenyl diphosphate + beta-D-GlcNAc-(1-&gt;4)-Mur2Ac(oyl-L-Ala-gamma-D-Glu-L-Lys-D-Ala-D-Ala)-di-trans,octa-cis-undecaprenyl diphosphate = [GlcNAc-(1-&gt;4)-Mur2Ac(oyl-L-Ala-gamma-D-Glu-L-Lys-D-Ala-D-Ala)](n+1)-di-trans,octa-cis-undecaprenyl diphosphate + di-trans,octa-cis-undecaprenyl diphosphate + H(+). It catalyses the reaction Preferential cleavage: (Ac)2-L-Lys-D-Ala-|-D-Ala. Also transpeptidation of peptidyl-alanyl moieties that are N-acyl substituents of D-alanine.. The protein operates within cell wall biogenesis; peptidoglycan biosynthesis. In terms of biological role, cell wall formation. May be involved in outgrowth of the germinated spore or it could function in the synthesis of the germ cell wall. The sequence is that of Penicillin-binding protein 1F (pbpF) from Bacillus subtilis (strain 168).